A 151-amino-acid polypeptide reads, in one-letter code: Deoxyuridine 5'-triphosphate nucleotidohydrolase (151 aa).

Substrate-binding positions include 70 to 72, Asn-83, 87 to 89, and Met-97; these read RSG and LID.

It belongs to the dUTPase family. It depends on Mg(2+) as a cofactor.

The enzyme catalyses dUTP + H2O = dUMP + diphosphate + H(+). Its pathway is pyrimidine metabolism; dUMP biosynthesis; dUMP from dCTP (dUTP route): step 2/2. In terms of biological role, this enzyme is involved in nucleotide metabolism: it produces dUMP, the immediate precursor of thymidine nucleotides and it decreases the intracellular concentration of dUTP so that uracil cannot be incorporated into DNA. The sequence is that of Deoxyuridine 5'-triphosphate nucleotidohydrolase from Pasteurella multocida (strain Pm70).